The sequence spans 1580 residues: Transcriptional activator GLI3 (1580 aa).

An N-acetylmethionine modification is found at Met1. Polar residues-rich tracts occupy residues 1-10 (MEAQSHSSTT) and 58-78 (ITMQPQNVQGLSKVSEEPSTS). The disordered stretch occupies residues 1 to 79 (MEAQSHSSTT…KVSEEPSTSS (79 aa)). Arg175 bears the Omega-N-methylarginine mark. Residues 368–475 (QSLGSAFGHS…DKDESKQEPE (108 aa)) are disordered. Over residues 401–427 (NPVQVSSGPSESSQNKPTSESAVSSTG) the composition is skewed to polar residues. Glycyl lysine isopeptide (Lys-Gly) (interchain with G-Cter in SUMO2) cross-links involve residues Lys438 and Lys462. Residues 461–474 (VKEEGDKDESKQEP) show a composition bias toward basic and acidic residues. C2H2-type zinc fingers lie at residues 480-505 (TNCHWEGCAREFDTQEQLVHHINNDH), 513-540 (FVCRWLDCSREQKPFKAQYMLVVHMRRH), 546-570 (HKCTFEGCTKAYSRLENLKTHLRSH), 576-601 (YVCEHEGCNKAFSNASDRAKHQNRTH), and 607-632 (YVCKIPGCTKRYTDPSSLRKHVKTVH). Residues 620–728 (DPSSLRKHVK…PISNYSNSGL (109 aa)) form a disordered region. A compositionally biased stretch (basic and acidic residues) spans 632–648 (HGPEAHVTKKQRGDIHP). Ser664 carries the phosphoserine modification. The span at 684 to 699 (SKREECLQVKTVKAEK) shows a compositional bias: basic and acidic residues. Positions 703-726 (SQPSPGGQSSCSSQQSPISNYSNS) are enriched in low complexity. Residues 745-845 (DETPIMDSTI…VDVTMLNMLN (101 aa)) are mediates interaction with DZIP1. Residue Lys773 forms a Glycyl lysine isopeptide (Lys-Gly) (interchain with G-Cter in ubiquitin) linkage. Residue Lys779 forms a Glycyl lysine isopeptide (Lys-Gly) (interchain with G-Cter in SUMO2); alternate linkage. Lys779 participates in a covalent cross-link: Glycyl lysine isopeptide (Lys-Gly) (interchain with G-Cter in ubiquitin); alternate. Glycyl lysine isopeptide (Lys-Gly) (interchain with G-Cter in ubiquitin) cross-links involve residues Lys784 and Lys800. A phosphoserine; by PKA mark is found at Ser849, Ser865, Ser877, and Ser907. Residues 863-882 (RSSGISPCFSSRRSSEASQA) show a composition bias toward low complexity. The interval 863–918 (RSSGISPCFSSRRSSEASQAEGRPQNVSVADSYDPISTDASRRSSEASQSDGLPSL) is disordered. A compositionally biased stretch (polar residues) spans 908–918 (EASQSDGLPSL). A phosphoserine; by PKA mark is found at Ser980 and Ser1006. The disordered stretch occupies residues 981–1042 (DGGAHGYGRR…PAMATSAEKR (62 aa)).

It belongs to the GLI C2H2-type zinc-finger protein family. In terms of assembly, the full-length GLI3 form (GLI3FL) interacts with SUFU and this interaction regulates the formation of either repressor or activator forms of GLI3. Its association with SUFU is regulated by Hh signaling and dissociation of the SUFU-GLI3 interaction requires the presence of the ciliary motor KIF3A. Interacts with KIF7. The activator form of GLI3 (GLI3A) but not the repressor form (GLI3R) can interact with TRPS1. The phosphorylated form interacts with BTRC. Interacts with ZIC1. Interacts with ZIC3 (via C2H2-type domains 3, 4 and 5); the interaction enhances its transcriptional activity. Interacts with WRD11; the interaction associates EMX1 with GLI3. Interacts with DZIP1; retains GLI3 within the cytoplasm. In terms of processing, phosphorylated on multiple sites by protein kinase A (PKA) and phosphorylation by PKA primes further phosphorylation by CK1 and GSK3. Phosphorylated by DYRK2 (in vitro). Phosphorylation is essential for its proteolytic processing. Transcriptional repressor GLI3R, a C-terminally truncated form, is generated from the full-length GLI3 protein (GLI3FL/GLI3-190) through proteolytic processing. This process requires PKA-primed phosphorylation of GLI3, ubiquitination of GLI3 and the presence of BTRC. GLI3FL is complexed with SUFU in the cytoplasm and is maintained in a neutral state. Without the Hh signal, the SUFU-GLI3 complex is recruited to cilia, leading to the efficient processing of GLI3FL into GLI3R. GLI3R formation leads to its dissociation from SUFU, allowing it to translocate into the nucleus, and repress Hh target genes. When Hh signaling is initiated, SUFU dissociates from GLI3FL and this has two consequences. First, GLI3R production is halted. Second, free GLI3FL translocates to the nucleus, where it is phosphorylated, destabilized, and converted to a transcriptional activator (GLI3A). Phosphorylated in vitro by ULK3.

It localises to the nucleus. It is found in the cytoplasm. Its subcellular location is the cell projection. The protein resides in the cilium. In terms of biological role, has a dual function as a transcriptional activator and a repressor of the sonic hedgehog (Shh) pathway, and plays a role in limb development. The full-length GLI3 form (GLI3FL) after phosphorylation and nuclear translocation, acts as an activator (GLI3A) while GLI3R, its C-terminally truncated form, acts as a repressor. A proper balance between the GLI3 activator and the repressor GLI3R, rather than the repressor gradient itself or the activator/repressor ratio gradient, specifies limb digit number and identity. In concert with TRPS1, plays a role in regulating the size of the zone of distal chondrocytes, in restricting the zone of PTHLH expression in distal cells and in activating chondrocyte proliferation. Binds to the minimal GLI-consensus sequence 5'-GGGTGGTC-3'. Plays a role in limb and brain development. The chain is Transcriptional activator GLI3 (GLI3) from Pan troglodytes (Chimpanzee).